The chain runs to 119 residues: Large ribosomal subunit protein bL20 (119 aa).

This sequence belongs to the bacterial ribosomal protein bL20 family.

Functionally, binds directly to 23S ribosomal RNA and is necessary for the in vitro assembly process of the 50S ribosomal subunit. It is not involved in the protein synthesizing functions of that subunit. The chain is Large ribosomal subunit protein bL20 (rplT) from Geobacillus stearothermophilus (Bacillus stearothermophilus).